Reading from the N-terminus, the 271-residue chain is Small ribosomal subunit protein uS2 (271 aa).

A disordered region spans residues 235–271 (FDAKNPLKPQNYNAPNKRPYQDSPRKPSYQNQNQNQI). The segment covering 262–271 (SYQNQNQNQI) has biased composition (polar residues).

Belongs to the universal ribosomal protein uS2 family.

This chain is Small ribosomal subunit protein uS2, found in Onion yellows phytoplasma (strain OY-M).